A 466-amino-acid chain; its full sequence is 3-isopropylmalate dehydratase large subunit (466 aa).

[4Fe-4S] cluster is bound by residues Cys-347, Cys-407, and Cys-410.

Belongs to the aconitase/IPM isomerase family. LeuC type 1 subfamily. As to quaternary structure, heterodimer of LeuC and LeuD. Requires [4Fe-4S] cluster as cofactor.

The catalysed reaction is (2R,3S)-3-isopropylmalate = (2S)-2-isopropylmalate. Its pathway is amino-acid biosynthesis; L-leucine biosynthesis; L-leucine from 3-methyl-2-oxobutanoate: step 2/4. Functionally, catalyzes the isomerization between 2-isopropylmalate and 3-isopropylmalate, via the formation of 2-isopropylmaleate. The polypeptide is 3-isopropylmalate dehydratase large subunit (Shewanella sediminis (strain HAW-EB3)).